A 400-amino-acid chain; its full sequence is Large envelope protein (400 aa).

Position 1 is an N-acetylmethionine (Met-1). Gly-2 carries the N-myristoyl glycine; by host lipid modification. Residues 2–119 form a pre-S1 region; it reads GGWSSKPRKG…PPLRDTHPQA (118 aa). The segment at 2 to 174 is pre-S; the sequence is GGWSSKPRKG…LSKTGDPVPN (173 aa). Topologically, residues 2 to 181 are virion surface; in external conformation; sequence GGWSSKPRKG…VPNMENISSG (180 aa). The Intravirion; in internal conformation segment spans residues 2–253; that stretch reads GGWSSKPRKG…PGYRWMCLRR (252 aa). The N-linked (GlcNAc...) asparagine glycan is linked to Trp-4. Disordered stretches follow at residues 29–50 and 85–118; these read QLDP…PHKD and LTTV…THPQ. Over residues 96-106 the composition is skewed to polar residues; sequence STSRQSGRQPT. The tract at residues 120-174 is pre-S2; it reads MQWNSTTFHQTLQDPRVRALYFPAGGSSSGTVSPAQNTVSAISSTLSKTGDPVPN. Residues 182 to 202 form a helical membrane-spanning segment; it reads LLGPLLVLQAGFFLLTKILTI. The Intravirion; in external conformation portion of the chain corresponds to 203–253; the sequence is PQSLDSWWTSLNFLGQTPVCLGQNSQSQISSHSLTCCPPICPGYRWMCLRR. The helical transmembrane segment at 254-274 threads the bilayer; that stretch reads FIIFLCILLLCLIFLLVLLDC. The Virion surface segment spans residues 275-348; the sequence is QGMLPVCPLI…WASVRFSWLS (74 aa). The N-linked (GlcNAc...) asparagine; by host glycan is linked to Asn-320. A helical membrane pass occupies residues 349–369; the sequence is LLVPFVQWFVGLSPTVWLSVI. Topologically, residues 370–375 are intravirion; that stretch reads WMMWFW. The helical transmembrane segment at 376–398 threads the bilayer; sequence GPSLCNILSPFMPLLPIFFCLWV. The Virion surface portion of the chain corresponds to 399-400; that stretch reads YI.

This sequence belongs to the orthohepadnavirus major surface antigen family. As to quaternary structure, interacts (via its myristoylated pre-S1 region) with the host SLC10A1/NTCP; this interaction is essential for viral entry. In its internal form (Li-HBsAg), interacts with the capsid protein and with the isoform S. Interacts with host chaperone CANX. In terms of assembly, associates with host chaperone CANX through its pre-S2 N glycan; this association may be essential for isoform M proper secretion. As to quaternary structure, interacts with isoform L. Interacts with the antigens of satellite virus HDV (HDVAgs); this interaction is required for encapsidation of HDV genomic RNA. In terms of processing, isoform M is N-terminally acetylated by host at a ratio of 90%, and N-glycosylated by host at the pre-S2 region. Post-translationally, myristoylated; this modification is essential for its interaction with the host protein SLC10A1/NTCP.

Its subcellular location is the virion membrane. In terms of biological role, the large envelope protein exists in two topological conformations, one which is termed 'external' or Le-HBsAg and the other 'internal' or Li-HBsAg. In its external conformation the protein attaches the virus to cell receptors and thereby initiating infection. This interaction determines the species specificity and liver tropism. This attachment induces virion internalization predominantly through caveolin-mediated endocytosis. The large envelope protein also assures fusion between virion membrane and endosomal membrane. In its internal conformation the protein plays a role in virion morphogenesis and mediates the contact with the nucleocapsid like a matrix protein. Functionally, the middle envelope protein plays an important role in the budding of the virion. It is involved in the induction of budding in a nucleocapsid independent way. In this process the majority of envelope proteins bud to form subviral lipoprotein particles of 22 nm of diameter that do not contain a nucleocapsid. The chain is Large envelope protein from Homo sapiens (Human).